The chain runs to 339 residues: Phenylalanine--tRNA ligase alpha subunit (339 aa).

Glutamate 253 provides a ligand contact to Mg(2+).

Belongs to the class-II aminoacyl-tRNA synthetase family. Phe-tRNA synthetase alpha subunit type 1 subfamily. In terms of assembly, tetramer of two alpha and two beta subunits. It depends on Mg(2+) as a cofactor.

It is found in the cytoplasm. The catalysed reaction is tRNA(Phe) + L-phenylalanine + ATP = L-phenylalanyl-tRNA(Phe) + AMP + diphosphate + H(+). The polypeptide is Phenylalanine--tRNA ligase alpha subunit (Chromohalobacter salexigens (strain ATCC BAA-138 / DSM 3043 / CIP 106854 / NCIMB 13768 / 1H11)).